A 587-amino-acid polypeptide reads, in one-letter code: Methylcrotonoyl-CoA carboxylase beta chain, mitochondrial (587 aa).

The transit peptide at 1-26 directs the protein to the mitochondrion; the sequence is MLRILGRRVVSASKELTSIQQWRIRP. Positions 68-324 constitute a CoA carboxyltransferase N-terminal domain; it reads MEGILSELRS…AAKQGMEGTF (257 aa). The carboxyltransferase stretch occupies residues 68-579; it reads MEGILSELRS…SAALNRPLED (512 aa). In terms of domain architecture, CoA carboxyltransferase C-terminal spans 333 to 579; sequence EPLYDINELR…SAALNRPLED (247 aa). The interval 367–396 is acyl-CoA binding; it reads EFDEFKKQYGTTLVTGFARIYGQTVGIIGN.

Belongs to the AccD/PCCB family. As to quaternary structure, probably a heterodimer composed of biotin-containing alpha subunits and beta subunits. In roots, cotyledons, leaves, flowers, ovaries, siliques and embryos.

The protein resides in the mitochondrion matrix. The catalysed reaction is 3-methylbut-2-enoyl-CoA + hydrogencarbonate + ATP = 3-methyl-(2E)-glutaconyl-CoA + ADP + phosphate + H(+). It functions in the pathway amino-acid degradation; L-leucine degradation; (S)-3-hydroxy-3-methylglutaryl-CoA from 3-isovaleryl-CoA: step 2/3. Its function is as follows. Carboxyltransferase subunit of the 3-methylcrotonyl-CoA carboxylase, an enzyme that catalyzes the conversion of 3-methylcrotonyl-CoA to 3-methylglutaconyl-CoA, a critical step for leucine and isovaleric acid catabolism. This chain is Methylcrotonoyl-CoA carboxylase beta chain, mitochondrial (MCCB), found in Arabidopsis thaliana (Mouse-ear cress).